The primary structure comprises 132 residues: Tyrosine phosphatase-like protein N2 (132 aa).

In terms of domain architecture, Tyrosine-protein phosphatase spans 1-132 (MQGPMKNTVA…DILGRFQRVF (132 aa)).

This sequence belongs to the protein-tyrosine phosphatase family.

This chain is Tyrosine phosphatase-like protein N2 (N4), found in Microplitis demolitor (Parasitoid wasp).